The sequence spans 244 residues: rRNA adenine N-6-methyltransferase (244 aa).

The S-adenosyl-L-methionine site is built by Asn-11, Ile-13, Gly-38, Glu-59, Asp-84, and Asn-101.

This sequence belongs to the class I-like SAM-binding methyltransferase superfamily. rRNA adenine N(6)-methyltransferase family.

It carries out the reaction adenosine(2085) in 23S rRNA + 2 S-adenosyl-L-methionine = N(6)-dimethyladenosine(2085) in 23S rRNA + 2 S-adenosyl-L-homocysteine + 2 H(+). In terms of biological role, this protein produces a dimethylation of the adenine residue at position 2085 in 23S rRNA, resulting in reduced affinity between ribosomes and macrolide-lincosamide-streptogramin B antibiotics. In Staphylococcus aureus, this protein is rRNA adenine N-6-methyltransferase (ermC).